A 147-amino-acid polypeptide reads, in one-letter code: uncharacterized protein (147 aa).

This sequence belongs to the RTX toxin acyltransferase family.

This is an uncharacterized protein from Synechocystis sp. (strain ATCC 27184 / PCC 6803 / Kazusa).